A 2555-amino-acid chain; its full sequence is Squalestatin hexaketide synthase clz14 (2555 aa).

The tract at residues 1–84 (MDVSKEAGHH…PNATSTTTTT (84 aa)) is disordered. Over residues 10–84 (HANGFANGNT…PNATSTTTTT (75 aa)) the composition is skewed to low complexity. In terms of domain architecture, Ketosynthase family 3 (KS3) spans 91–511 (QVPVAICGIG…GSNTHIIIDS (421 aa)). Active-site for beta-ketoacyl synthase activity residues include C261, H398, and H435. Residues 611–928 (FIFTGQGAQW…LEGIGKLFCF (318 aa)) are malonyl-CoA:ACP transacylase (MAT) domain. The interval 975 to 1104 (HELLGERSLE…GLVTASVVTS (130 aa)) is N-terminal hotdog fold. Residues 975-1256 (HELLGERSLE…RGFKCKKTDD (282 aa)) form a dehydratase (DH) domain region. One can recognise a PKS/mFAS DH domain in the interval 975 to 1260 (HELLGERSLE…CKKTDDAFIQ (286 aa)). H1007 (proton acceptor; for dehydratase activity) is an active-site residue. The segment at 1117-1260 (SRKVDTSRWY…CKKTDDAFIQ (144 aa)) is C-terminal hotdog fold. D1177 serves as the catalytic Proton donor; for dehydratase activity. A methyltransferase (CMet) domain region spans residues 1424–1595 (SFFQAAGLNK…GFEGAGTVVL (172 aa)). The segment at 1821-2141 (GMLNTLHWVG…RGVHMGRIVV (321 aa)) is enoyl reductase (ER) (ER) domain. Residues 2165-2338 (STYLLTGGMG…PASVIDIAAI (174 aa)) form a ketoreductase (KR) domain region. Residues 2468–2546 (IIFAQEIAKR…SLGRLATKRL (79 aa)) form the Carrier domain. An O-(pantetheine 4'-phosphoryl)serine modification is found at S2505.

Its pathway is secondary metabolite biosynthesis. Highly reducing polyketide synthase (HR-PKS); part of the gene cluster that mediates the biosynthesis of squalestatin S1 (SQS1, also known as zaragozic acid A), a heavily oxidized fungal polyketide that offers potent cholesterol lowering activity by targeting squalene synthase (SS). SQS1 is composed of a 2,8-dioxobicyclic[3.2.1]octane-3,4,5-tricarboxyclic acid core that is connected to two lipophilic polyketide arms. These initial steps feature the priming of an unusual benzoic acid starter unit onto the highly reducing polyketide synthase clz14, followed by oxaloacetate extension and product release to generate a tricarboxylic acid containing product. The phenylalanine ammonia lyase (PAL) clz10 and the acyl-CoA ligase clz12 are involved in transforming phenylalanine into benzoyl-CoA. The citrate synthase-like protein clz17 is involved in connecting the C-alpha-carbons of the hexaketide chain and oxaloacetate to afford the tricarboxylic acid unit. The potential hydrolytic enzymes, clz11 and clz13, are in close proximity to pks2 and may participate in product release. On the other side, the tetraketide arm is synthesized by a the squalestatin tetraketide synthase clz2 and enzymatically esterified to the core in the last biosynthetic step, by the acetyltransferase clz6. The biosynthesis of the tetraketide must involve 3 rounds of chain extension. After the first and second rounds methyl-transfer occurs, and in all rounds of extension the ketoreductase and dehydratase are active. The enoyl reductase and C-MeT of clz2 are not active in the final round of extension. The acetyltransferase clz6 appears to have a broad substrate selectivity for its acyl CoA substrate, allowing the in vitro synthesis of novel squalestatins. The biosynthesis of SQS1 requires several oxidative steps likely performed by oxidoreductases clz3, clz15 and clz16. Finally, in support of the identification of the cluster as being responsible for SQS1 production, the cluster contains a gene encoding a putative squalene synthase (SS) clz20, suggesting a likely mechanism for self-resistance. The polypeptide is Squalestatin hexaketide synthase clz14 (Cochliobolus lunatus (Filamentous fungus)).